We begin with the raw amino-acid sequence, 378 residues long: MLKLIGSLVLLASAAEVIASPLAESVAPSITLEKRASCTFSGSNGAAAAMASQKACSTIVLSNVAVPAGTTLDLSDLADGTTVIFEGETTWGYKEWSGPLLQISGKNIKVEGASGATLNPDGARWWDGQGGNGGKTKPKFFAAHGLTSSSSITNLHILNTPVQAVSINGCDGLTVTDMTIDDSAGDTQGGHNTDAFDIGSSSNIIISGAKVYNQDDCVAVNSGTGITFTGGLCSGGHGLSIGSVGGRSDNTVENVSFTNSQVTKSDNGLRIKASKGKTGTIKGITYSGITLSSIRKYGILIEQNYDGGDLKGDPTSGIPITDLTMENISGKGAVASSGHNIAIVCGSGACSNWTWKNVEVTGGQTYGSCENVPSVAQC.

A signal peptide spans 1 to 19 (MLKLIGSLVLLASAAEVIA). A propeptide spanning residues 20-35 (SPLAESVAPSITLEKR) is cleaved from the precursor. The cysteines at positions 38 and 56 are disulfide-linked. 3 PbH1 repeats span residues 147–169 (TSSS…SING), 170–200 (CDGL…DIGS), and 201–222 (SSNI…AVNS). Aspartate 215 (proton donor) is an active-site residue. Cysteines 217 and 233 form a disulfide. Histidine 237 is an active-site residue. 2 PbH1 repeats span residues 247–273 (RSDN…RIKA) and 281–303 (IKGI…LIEQ). Asparagine 254 carries N-linked (GlcNAc...) asparagine glycosylation. An N-linked (GlcNAc...) asparagine glycan is attached at asparagine 327. Intrachain disulfides connect cysteine 345–cysteine 350 and cysteine 369–cysteine 378.

Belongs to the glycosyl hydrolase 28 family.

The protein localises to the secreted. The enzyme catalyses (1,4-alpha-D-galacturonosyl)n+m + H2O = (1,4-alpha-D-galacturonosyl)n + (1,4-alpha-D-galacturonosyl)m.. In terms of biological role, involved in maceration and soft-rotting of plant tissue. Hydrolyzes the 1,4-alpha glycosidic bonds of de-esterified pectate in the smooth region of the plant cell wall. The protein is Probable endopolygalacturonase NFIA_008150 of Neosartorya fischeri (strain ATCC 1020 / DSM 3700 / CBS 544.65 / FGSC A1164 / JCM 1740 / NRRL 181 / WB 181) (Aspergillus fischerianus).